The primary structure comprises 305 residues: MLKQRTIKSIVKTVGIGVHSGRKVELTLRPAAPDTGIVFSRVDLPTPVDIPASALSIGDTRLASVLQKDGVRVSTVEHLMSACAGLGIDNLYVDVTAEEIPIMDGSAATFVFLIQSAGIEEQNAAKKFIKVTKPVEIRDGDKFARLDPYFGFRLKFTIDFRHPAVDKTGQELEVDFANTSYVREIARARTFGFAHEVEMMRELGLARGGSMDNAIVLDEYRILNNDGLRYDDEFVKHKMLDAIGDLYVIGHPLLASYTAYKSGHGLNNALLRELLAHEQAYEIVTFDDPKTAPTGFGFDAQTAFA.

3 residues coordinate Zn(2+): His-78, His-237, and Asp-241. The active-site Proton donor is the His-264.

This sequence belongs to the LpxC family. Zn(2+) serves as cofactor.

It catalyses the reaction a UDP-3-O-[(3R)-3-hydroxyacyl]-N-acetyl-alpha-D-glucosamine + H2O = a UDP-3-O-[(3R)-3-hydroxyacyl]-alpha-D-glucosamine + acetate. Its pathway is glycolipid biosynthesis; lipid IV(A) biosynthesis; lipid IV(A) from (3R)-3-hydroxytetradecanoyl-[acyl-carrier-protein] and UDP-N-acetyl-alpha-D-glucosamine: step 2/6. In terms of biological role, catalyzes the hydrolysis of UDP-3-O-myristoyl-N-acetylglucosamine to form UDP-3-O-myristoylglucosamine and acetate, the committed step in lipid A biosynthesis. The protein is UDP-3-O-acyl-N-acetylglucosamine deacetylase of Burkholderia pseudomallei (strain 668).